The sequence spans 656 residues: Chaperone protein HtpG (656 aa).

The segment at 1–364 is a; substrate-binding; sequence MSEQNPTDSK…SADLPLNVSR (364 aa). Residues 365–583 form a b region; that stretch reads EILQESRDVK…EGELSPQMIQ (219 aa). The interval 584 to 656 is c; sequence MLKQMGQDVP…LRRVNELLMK (73 aa).

It belongs to the heat shock protein 90 family. As to quaternary structure, homodimer.

It localises to the cytoplasm. Molecular chaperone. Has ATPase activity. In Psychrobacter arcticus (strain DSM 17307 / VKM B-2377 / 273-4), this protein is Chaperone protein HtpG.